Here is a 179-residue protein sequence, read N- to C-terminus: MSSRVLTPDVVGIDALVHDHQTVLAKAEGGVVAVFANNAPAFYAITPARLAELLALEEKLARPGSDVALDDQLYQEPQTAPVAVPMGKFAMYPDWQPDADFIRLAALWGVALREPVTAEELASFIAYWQAEGKVFHHVQWQQKLARSLQIGRASNGGLPKRDVNTVSEPDSQIPPGFRG.

A disordered region spans residues 156–179; that stretch reads GGLPKRDVNTVSEPDSQIPPGFRG.

This sequence belongs to the DnaT family. In terms of assembly, homooligomerizes. Interacts with PriB. Component of the replication restart primosome. Primosome assembly occurs via a 'hand-off' mechanism. PriA binds to replication forks, subsequently PriB then DnaT bind; DnaT then displaces ssDNA to generate the helicase loading substrate.

Functionally, involved in the restart of stalled replication forks, which reloads the replicative helicase on sites other than the origin of replication. Can function in multiple replication restart pathways. Displaces ssDNA from a PriB-ssDNA complex. Probably forms a spiral filament on ssDNA. The protein is Replication restart protein DnaT of Escherichia coli O7:K1 (strain IAI39 / ExPEC).